Reading from the N-terminus, the 2245-residue chain is Basic helix-loop-helix domain-containing protein USF3 (2245 aa).

Residues 1-28 are disordered; that stretch reads MPEMTENETPTKKQHRKKNRETHNAVER. Positions 18–69 constitute a bHLH domain; sequence KNRETHNAVERHRKKKINAGINRIGELIPCSPALKQSKNMILDQAFKYITEL. Positions 77–112 form a coiled coil; that stretch reads LLNGGNNEQAEEIKKLRKQLEEIQKENGRYIELLKA. Disordered regions lie at residues 271 to 290, 447 to 470, 881 to 900, 906 to 933, 1015 to 1041, 1164 to 1238, 1307 to 1331, 1460 to 1624, 1636 to 1664, 1736 to 1764, 1777 to 1815, 1834 to 1859, and 1891 to 2031; these read LHTC…QENP, SQTP…TSNH, SKSK…VTSE, AAKS…ALSD, KNPQ…IVDS, PSEA…SITS, IPNS…AKRA, IKQQ…VSGH, LEQQ…ERNR, TFKP…GNPV, ISQN…ENTC, GSQR…YNCP, and STLN…QPAT. A compositionally biased stretch (polar residues) spans 273–288; sequence TCLNDQNSSENKNGQE. Low complexity predominate over residues 881–896; the sequence is SKSKSAEKSSPPSQES. Over residues 912 to 925 the composition is skewed to polar residues; the sequence is STPNLQQETSQDKP. Polar residues-rich tracts occupy residues 1185–1202 and 1219–1238; these read GTGQ…QGSI and IKTS…SITS. The segment covering 1319-1331 has biased composition (basic and acidic residues); the sequence is PSHESRKDSAKRA. Residues 1462–1478 are compositionally biased toward low complexity; it reads QQQQQQQQQQQQQQQQQ. Polar residues-rich tracts occupy residues 1501–1520 and 1528–1538; these read SVHS…QEVQ and VQGTQTSQLSL. The span at 1560 to 1569 shows a compositional bias: low complexity; the sequence is QQMQQQMQQH. Residues 1570-1585 are compositionally biased toward polar residues; the sequence is FGSSQTEKSCENPSTS. A compositionally biased stretch (low complexity) spans 1593 to 1624; that stretch reads QNHLNQDIMHQQQDVGSRQQGSGVSSEHVSGH. Residues 1636 to 1654 show a composition bias toward polar residues; sequence LEQQMVSQPSIVTRSSDMT. 2 stretches are compositionally biased toward polar residues: residues 1904 to 1923 and 1998 to 2007; these read GDIQ…SNPM and SGNQRQSTVF.

The protein resides in the nucleus. Its function is as follows. Involved in the negative regulation of epithelial-mesenchymal transition, the process by which epithelial cells lose their polarity and adhesion properties to become mesenchymal cells with enhanced migration and invasive properties. This Homo sapiens (Human) protein is Basic helix-loop-helix domain-containing protein USF3.